Here is a 183-residue protein sequence, read N- to C-terminus: Adenine phosphoribosyltransferase (183 aa).

This sequence belongs to the purine/pyrimidine phosphoribosyltransferase family. As to quaternary structure, homodimer.

It localises to the cytoplasm. It carries out the reaction AMP + diphosphate = 5-phospho-alpha-D-ribose 1-diphosphate + adenine. Its pathway is purine metabolism; AMP biosynthesis via salvage pathway; AMP from adenine: step 1/1. Functionally, catalyzes a salvage reaction resulting in the formation of AMP, that is energically less costly than de novo synthesis. This Shewanella sp. (strain ANA-3) protein is Adenine phosphoribosyltransferase.